Here is a 156-residue protein sequence, read N- to C-terminus: Small ribosomal subunit protein uS7 (156 aa).

It belongs to the universal ribosomal protein uS7 family. In terms of assembly, part of the 30S ribosomal subunit. Contacts proteins S9 and S11.

Its function is as follows. One of the primary rRNA binding proteins, it binds directly to 16S rRNA where it nucleates assembly of the head domain of the 30S subunit. Is located at the subunit interface close to the decoding center, probably blocks exit of the E-site tRNA. In Azoarcus sp. (strain BH72), this protein is Small ribosomal subunit protein uS7.